A 470-amino-acid polypeptide reads, in one-letter code: Aromatic amino acid aminotransferase C569.07 (470 aa).

Belongs to the class-I pyridoxal-phosphate-dependent aminotransferase family. Pyridoxal 5'-phosphate is required as a cofactor.

The protein localises to the cytoplasm. The enzyme catalyses an aromatic L-alpha-amino acid + 2-oxoglutarate = an aromatic oxo-acid + L-glutamate. Its function is as follows. Has aromatic amino acid transaminase activity. The sequence is that of Aromatic amino acid aminotransferase C569.07 from Schizosaccharomyces pombe (strain 972 / ATCC 24843) (Fission yeast).